A 319-amino-acid polypeptide reads, in one-letter code: Glutamyl-Q tRNA(Asp) synthetase (319 aa).

L-glutamate contacts are provided by residues 23-27 (RFAPS) and Glu59. The 'HIGH' region motif lies at 26-36 (PSPSGPLHAGS). Zn(2+) contacts are provided by Cys115, Cys117, Tyr139, and Cys143. Residues Tyr197 and Arg215 each coordinate L-glutamate. Positions 254 to 258 (KLSKQ) match the 'KMSKS' region motif. Lys257 provides a ligand contact to ATP.

This sequence belongs to the class-I aminoacyl-tRNA synthetase family. GluQ subfamily. Zn(2+) is required as a cofactor.

In terms of biological role, catalyzes the tRNA-independent activation of glutamate in presence of ATP and the subsequent transfer of glutamate onto a tRNA(Asp). Glutamate is transferred on the 2-amino-5-(4,5-dihydroxy-2-cyclopenten-1-yl) moiety of the queuosine in the wobble position of the QUC anticodon. The sequence is that of Glutamyl-Q tRNA(Asp) synthetase from Bordetella bronchiseptica (strain ATCC BAA-588 / NCTC 13252 / RB50) (Alcaligenes bronchisepticus).